The chain runs to 238 residues: MADLSIQGLCALLHLASPQLPVGGFSYSQGLEAAIEHGLVTDAGTARTWIADALAHGFARCEAPLWLLLRRAWSAGDEGAVHEWNQWFIASRDSREARAETLQMGWSLHSLLRSVPWGGEAFAPRIAQLGALVEGAGLAYPTAFACACAAVDADEDHALLAYGFAWLENQVAAAIKAVPLGQVAGQSLLLALHPLLEQAVCEARRRASEAPPRLDTMLPQWSVLQARHEHQYSRLFRS.

Belongs to the UreF family. As to quaternary structure, ureD, UreF and UreG form a complex that acts as a GTP-hydrolysis-dependent molecular chaperone, activating the urease apoprotein by helping to assemble the nickel containing metallocenter of UreC. The UreE protein probably delivers the nickel.

The protein resides in the cytoplasm. Functionally, required for maturation of urease via the functional incorporation of the urease nickel metallocenter. The polypeptide is Urease accessory protein UreF (Delftia acidovorans (strain DSM 14801 / SPH-1)).